A 312-amino-acid polypeptide reads, in one-letter code: Chitin deacetylase 2 (312 aa).

A signal peptide spans 1 to 44 (MRIQLNTIDLQCIIALSCLGQFVHAEANREDLKQIDFQFPVLER). A disulfide bridge connects residues C117 and C300. The NodB homology domain maps to 118–307 (SKLSQTFDDG…SHCVGGIDYI (190 aa)). D125 serves as the catalytic Proton acceptor. Position 125 (D125) interacts with acetate. D126 contacts Co(2+). N142 carries N-linked (GlcNAc...) asparagine glycosylation. Residues H172 and H176 each coordinate Co(2+). Residues N181 and N199 are each glycosylated (N-linked (GlcNAc...) asparagine). Y213 contributes to the acetate binding site. Residues N246 and N263 are each glycosylated (N-linked (GlcNAc...) asparagine). The Proton donor role is filled by H273.

Belongs to the polysaccharide deacetylase family. In terms of assembly, monomer. Co(2+) serves as cofactor. In terms of processing, N-glycosylated.

Its subcellular location is the prospore. The catalysed reaction is [(1-&gt;4)-N-acetyl-beta-D-glucosaminyl](n) + n H2O = chitosan + n acetate. Its function is as follows. Hydrolyzes the N-acetamido groups of N-acetyl-D-glucosamine residues in chitin to form chitosan and acetate. Chitosan is a component of the spore wall. The sequence is that of Chitin deacetylase 2 from Saccharomyces cerevisiae (strain ATCC 204508 / S288c) (Baker's yeast).